We begin with the raw amino-acid sequence, 488 residues long: Aerolysin (488 aa).

The first 24 residues, Met-1–Ala-24, serve as a signal peptide directing secretion. Disulfide bonds link Cys-43-Cys-99 and Cys-183-Cys-188. The interaction with host N-linked glycan stretch occupies residues Trp-69–Tyr-85. Positions Tyr-256–Trp-288 are part of the transmembrane beta-barrel after proteolytic activation of the toxin and insertion into the host membrane. Residues Arg-346–His-355 are interaction with glycans from host GPI-anchor. A propeptide spanning residues Thr-444–Gln-488 is cleaved from the precursor.

This sequence belongs to the aerolysin family. In terms of assembly, homodimer in solution; homoheptamer in the host membrane. After binding to GPI-anchored proteins in target membranes and proteolytic removal of the C-terminal propeptide, the protein assembles into a heptameric pre-pore complex. A further conformation change leads to insertion into the host membrane. Proteolytic cleavage and subsequent release of the propeptide trigger a major conformation change, leading to the formation of a heptameric pre-pore that then inserts into the host membrane.

It localises to the secreted. The protein localises to the host cell membrane. Functionally, secreted, cytolytic toxin that forms pores in host membranes after proteolytic removal of a C-terminal propeptide, leading to destruction of the membrane permeability barrier and cell death. The pores are formed by transmembrane beta-strands and are approximately 3 nm in diameter. In Aeromonas sobria, this protein is Aerolysin (asa1).